Reading from the N-terminus, the 294-residue chain is Pyridoxal 5'-phosphate synthase subunit PdxS (294 aa).

D24 contributes to the D-ribose 5-phosphate binding site. The Schiff-base intermediate with D-ribose 5-phosphate role is filled by K81. G153 contacts D-ribose 5-phosphate. Residue R165 coordinates D-glyceraldehyde 3-phosphate. D-ribose 5-phosphate-binding positions include G214 and 235 to 236 (GS).

This sequence belongs to the PdxS/SNZ family. In the presence of PdxT, forms a dodecamer of heterodimers.

It catalyses the reaction aldehydo-D-ribose 5-phosphate + D-glyceraldehyde 3-phosphate + L-glutamine = pyridoxal 5'-phosphate + L-glutamate + phosphate + 3 H2O + H(+). The protein operates within cofactor biosynthesis; pyridoxal 5'-phosphate biosynthesis. Catalyzes the formation of pyridoxal 5'-phosphate from ribose 5-phosphate (RBP), glyceraldehyde 3-phosphate (G3P) and ammonia. The ammonia is provided by the PdxT subunit. Can also use ribulose 5-phosphate and dihydroxyacetone phosphate as substrates, resulting from enzyme-catalyzed isomerization of RBP and G3P, respectively. In Bacillus velezensis (strain DSM 23117 / BGSC 10A6 / LMG 26770 / FZB42) (Bacillus amyloliquefaciens subsp. plantarum), this protein is Pyridoxal 5'-phosphate synthase subunit PdxS.